The chain runs to 116 residues: Large ribosomal subunit protein uL22 (116 aa).

This sequence belongs to the universal ribosomal protein uL22 family. Part of the 50S ribosomal subunit.

In terms of biological role, this protein binds specifically to 23S rRNA; its binding is stimulated by other ribosomal proteins, e.g. L4, L17, and L20. It is important during the early stages of 50S assembly. It makes multiple contacts with different domains of the 23S rRNA in the assembled 50S subunit and ribosome. The globular domain of the protein is located near the polypeptide exit tunnel on the outside of the subunit, while an extended beta-hairpin is found that lines the wall of the exit tunnel in the center of the 70S ribosome. The polypeptide is Large ribosomal subunit protein uL22 (Sulfurihydrogenibium sp. (strain YO3AOP1)).